The primary structure comprises 1348 residues: Phosphoribosylformylglycinamidine synthase (1348 aa).

Residues 300 to 311 (GAATGAGGEIRD) and alanine 701 each bind ATP. Mg(2+) is bound by residues aspartate 702, glutamate 741, asparagine 745, and aspartate 941. Serine 943 lines the ATP pocket. In terms of domain architecture, Glutamine amidotransferase type-1 spans 1099 to 1348 (VAILREQGVN…MFRNARVWCG (250 aa)). Cysteine 1192 (nucleophile) is an active-site residue. Catalysis depends on residues histidine 1313 and glutamate 1315.

In the N-terminal section; belongs to the FGAMS family. In terms of assembly, monomer.

The protein localises to the cytoplasm. The catalysed reaction is N(2)-formyl-N(1)-(5-phospho-beta-D-ribosyl)glycinamide + L-glutamine + ATP + H2O = 2-formamido-N(1)-(5-O-phospho-beta-D-ribosyl)acetamidine + L-glutamate + ADP + phosphate + H(+). It functions in the pathway purine metabolism; IMP biosynthesis via de novo pathway; 5-amino-1-(5-phospho-D-ribosyl)imidazole from N(2)-formyl-N(1)-(5-phospho-D-ribosyl)glycinamide: step 1/2. Phosphoribosylformylglycinamidine synthase involved in the purines biosynthetic pathway. Catalyzes the ATP-dependent conversion of formylglycinamide ribonucleotide (FGAR) and glutamine to yield formylglycinamidine ribonucleotide (FGAM) and glutamate. The polypeptide is Phosphoribosylformylglycinamidine synthase (Xanthomonas campestris pv. campestris (strain ATCC 33913 / DSM 3586 / NCPPB 528 / LMG 568 / P 25)).